A 128-amino-acid chain; its full sequence is UPF0325 protein YaeH (128 aa).

The protein belongs to the UPF0325 family.

This chain is UPF0325 protein YaeH, found in Shigella boydii serotype 18 (strain CDC 3083-94 / BS512).